We begin with the raw amino-acid sequence, 81 residues long: ATP synthase subunit c, chloroplastic (81 aa).

Helical transmembrane passes span 3 to 23 (PLIS…ASIG) and 57 to 77 (LAFM…LLFA).

The protein belongs to the ATPase C chain family. F-type ATPases have 2 components, F(1) - the catalytic core - and F(0) - the membrane proton channel. F(1) has five subunits: alpha(3), beta(3), gamma(1), delta(1), epsilon(1). F(0) has four main subunits: a(1), b(1), b'(1) and c(10-14). The alpha and beta chains form an alternating ring which encloses part of the gamma chain. F(1) is attached to F(0) by a central stalk formed by the gamma and epsilon chains, while a peripheral stalk is formed by the delta, b and b' chains.

The protein resides in the plastid. The protein localises to the chloroplast thylakoid membrane. F(1)F(0) ATP synthase produces ATP from ADP in the presence of a proton or sodium gradient. F-type ATPases consist of two structural domains, F(1) containing the extramembraneous catalytic core and F(0) containing the membrane proton channel, linked together by a central stalk and a peripheral stalk. During catalysis, ATP synthesis in the catalytic domain of F(1) is coupled via a rotary mechanism of the central stalk subunits to proton translocation. In terms of biological role, key component of the F(0) channel; it plays a direct role in translocation across the membrane. A homomeric c-ring of between 10-14 subunits forms the central stalk rotor element with the F(1) delta and epsilon subunits. This Acorus calamus var. americanus (American sweet flag) protein is ATP synthase subunit c, chloroplastic.